We begin with the raw amino-acid sequence, 496 residues long: RNA-binding motif protein, Y chromosome, family 1 member E (496 aa).

Positions 8–85 (GKLFIGGLNR…KAIKVEQAKK (78 aa)) constitute an RRM domain. Disordered regions lie at residues 67–348 (DMNG…PHRD) and 453–496 (DQRN…SSRY). Low complexity-rich tracts occupy residues 97–114 (PASS…SARG) and 149–159 (PVKRGPSSRSG). Polar residues predominate over residues 175 to 184 (NSWMGSQGPM). 6 stretches are compositionally biased toward basic and acidic residues: residues 204 to 214 (RNDRMSTRHDG), 242 to 253 (DNGHSNRDEHSS), 276 to 289 (AYRD…DESY), 313 to 326 (GYRD…HESY), 335 to 348 (SSRE…PHRD), and 484 to 496 (GESR…SSRY).

As to quaternary structure, interacts with splicing factor proteins SFRS3/SRP20, TRA2B/SFRS10, KHDRBS1/SAM68 and KHDRBS3. In terms of tissue distribution, testis-specific.

It is found in the nucleus. In terms of biological role, RNA-binding protein which may be involved in spermatogenesis. Required for sperm development, possibly by participating in pre-mRNA splicing in the testis. The chain is RNA-binding motif protein, Y chromosome, family 1 member E (RBMY1E) from Homo sapiens (Human).